Consider the following 714-residue polypeptide: Lipase maturation factor 2 (714 aa).

9 helical membrane passes run 11–31 (LFLA…YLQI), 79–99 (MELL…CAPL), 103–125 (LLFA…FLYF), 159–179 (SVTF…SGVV), 221–241 (FSVV…FMPI), 257–277 (ILII…VLAF), 304–324 (TLLS…LLYW), 358–378 (VTLP…LSAL), and 398–418 (AVFA…FTYI). Residue N483 is glycosylated (N-linked (GlcNAc...) asparagine). A helical membrane pass occupies residues 629–649 (PFSPHVVLWSLYVVAATTCLL). Basic residues predominate over residues 654–669 (RRPRGGAPPTRHKAPK). Residues 654–714 (RRPRGGAPPT…EGPRGTKRRK (61 aa)) are disordered. Positions 683-708 (RRKEGREAEERGEGRSRGAADGEGPR) are enriched in basic and acidic residues.

The protein belongs to the lipase maturation factor family.

It localises to the endoplasmic reticulum membrane. Its function is as follows. Involved in the maturation of specific proteins in the endoplasmic reticulum. May be required for maturation and transport of active lipoprotein lipase (LPL) through the secretory pathway. In Gallus gallus (Chicken), this protein is Lipase maturation factor 2 (LMF2).